We begin with the raw amino-acid sequence, 115 residues long: Putative UPF0377 protein YHL045W (115 aa).

A helical transmembrane segment spans residues 10–30 (ACIFIDSVCEGIVFWGLCLFV).

Belongs to the UPF0377 family.

It is found in the membrane. This Saccharomyces cerevisiae (strain ATCC 204508 / S288c) (Baker's yeast) protein is Putative UPF0377 protein YHL045W.